Here is a 409-residue protein sequence, read N- to C-terminus: NADH-quinone oxidoreductase subunit D (409 aa).

The protein belongs to the complex I 49 kDa subunit family. As to quaternary structure, NDH-1 is composed of 14 different subunits. Subunits NuoB, C, D, E, F, and G constitute the peripheral sector of the complex.

Its subcellular location is the cell inner membrane. It carries out the reaction a quinone + NADH + 5 H(+)(in) = a quinol + NAD(+) + 4 H(+)(out). NDH-1 shuttles electrons from NADH, via FMN and iron-sulfur (Fe-S) centers, to quinones in the respiratory chain. The immediate electron acceptor for the enzyme in this species is believed to be ubiquinone. Couples the redox reaction to proton translocation (for every two electrons transferred, four hydrogen ions are translocated across the cytoplasmic membrane), and thus conserves the redox energy in a proton gradient. The polypeptide is NADH-quinone oxidoreductase subunit D (Sulfurovum sp. (strain NBC37-1)).